Reading from the N-terminus, the 74-residue chain is Conotoxin ArMKLT2-041 (74 aa).

Positions 1 to 22 (MKLTCVLIVAVLFLTACQLIAA) are cleaved as a signal peptide. Positions 23-46 (DDSRDLQKFPRRKMRDGMLNTKNT) are excised as a propeptide. Gln49 is modified (pyrrolidone carboxylic acid). Disulfide bonds link Cys50-Cys65, Cys57-Cys68, and Cys64-Cys73.

This sequence belongs to the conotoxin O1 superfamily. In terms of tissue distribution, expressed by the venom duct.

Its subcellular location is the secreted. The chain is Conotoxin ArMKLT2-041 from Conus arenatus (Sand-dusted cone).